Here is a 70-residue protein sequence, read N- to C-terminus: Bowman-Birk type proteinase inhibitor A-II (70 aa).

7 disulfides stabilise this stretch: Cys11–Cys68, Cys12–Cys29, Cys15–Cys63, Cys17–Cys27, Cys36–Cys43, Cys40–Cys55, and Cys45–Cys53.

It belongs to the Bowman-Birk serine protease inhibitor family.

These proteins inhibit trypsin and chymotrypsin, having 2 sites of interaction with trypsin. The site of interaction with chymotrypsin has not been determined but is not independent of the trypsin-reactive sites. In Arachis hypogaea (Peanut), this protein is Bowman-Birk type proteinase inhibitor A-II.